The primary structure comprises 293 residues: ATP synthase gamma chain (293 aa).

The protein belongs to the ATPase gamma chain family. In terms of assembly, F-type ATPases have 2 components, CF(1) - the catalytic core - and CF(0) - the membrane proton channel. CF(1) has five subunits: alpha(3), beta(3), gamma(1), delta(1), epsilon(1). CF(0) has three main subunits: a, b and c.

It localises to the cell inner membrane. Its function is as follows. Produces ATP from ADP in the presence of a proton gradient across the membrane. The gamma chain is believed to be important in regulating ATPase activity and the flow of protons through the CF(0) complex. This Sinorhizobium fredii (strain NBRC 101917 / NGR234) protein is ATP synthase gamma chain.